The primary structure comprises 497 residues: Histone-lysine N-methyltransferase ASHR3 (497 aa).

The PHD-type zinc finger occupies 118–186 (MVDCLVCHKP…QWRCVKCPMA (69 aa)). The AWS domain maps to 283–326 (DGVGCTNCGPNCDRSCVCRVQCISCSKGCSCPESCGNRPFRKEK). In terms of domain architecture, SET spans 326-443 (KKIKIVKTEH…AGEPLTYDYR (118 aa)). A Post-SET domain is found at 449–465 (PEVKCNCGSENCQGYLG).

This sequence belongs to the class V-like SAM-binding methyltransferase superfamily. Histone-lysine methyltransferase family. SET2 subfamily. Interacts with AMS/bHLH21 by its SET domain and PHD finger. In terms of tissue distribution, expressed in roots, flowers and buds, the anther and in stamen filaments.

It is found in the nucleus. Its subcellular location is the chromosome. It catalyses the reaction L-lysyl-[histone] + S-adenosyl-L-methionine = N(6)-methyl-L-lysyl-[histone] + S-adenosyl-L-homocysteine + H(+). Its function is as follows. Histone methyltransferase. Involved in stamen development. The chain is Histone-lysine N-methyltransferase ASHR3 (ASHR3) from Arabidopsis thaliana (Mouse-ear cress).